The sequence spans 142 residues: Transcriptional regulator MraZ (142 aa).

2 consecutive SpoVT-AbrB domains span residues 5–47 (RFTH…PMDS) and 76–119 (ATVV…SPEN).

Belongs to the MraZ family. In terms of assembly, forms oligomers.

It localises to the cytoplasm. The protein localises to the nucleoid. This is Transcriptional regulator MraZ from Thermomicrobium roseum (strain ATCC 27502 / DSM 5159 / P-2).